Reading from the N-terminus, the 199-residue chain is Peptidyl-tRNA hydrolase (199 aa).

Tyr-18 is a tRNA binding site. His-23 functions as the Proton acceptor in the catalytic mechanism. Residues Tyr-72, Asn-74, and Asn-120 each contribute to the tRNA site.

It belongs to the PTH family. In terms of assembly, monomer.

The protein localises to the cytoplasm. It catalyses the reaction an N-acyl-L-alpha-aminoacyl-tRNA + H2O = an N-acyl-L-amino acid + a tRNA + H(+). Its function is as follows. Hydrolyzes ribosome-free peptidyl-tRNAs (with 1 or more amino acids incorporated), which drop off the ribosome during protein synthesis, or as a result of ribosome stalling. Catalyzes the release of premature peptidyl moieties from peptidyl-tRNA molecules trapped in stalled 50S ribosomal subunits, and thus maintains levels of free tRNAs and 50S ribosomes. This chain is Peptidyl-tRNA hydrolase, found in Bifidobacterium animalis subsp. lactis (strain AD011).